Here is a 174-residue protein sequence, read N- to C-terminus: Co-chaperone protein HscB (174 aa).

The region spanning 2–74 is the J domain; the sequence is NYFTLFDLPR…LNRAIYFLCL (73 aa).

This sequence belongs to the HscB family. Interacts with HscA and stimulates its ATPase activity. Interacts with IscU.

Co-chaperone involved in the maturation of iron-sulfur cluster-containing proteins. Seems to help targeting proteins to be folded toward HscA. This Buchnera aphidicola subsp. Acyrthosiphon pisum (strain Tuc7) protein is Co-chaperone protein HscB.